Consider the following 616-residue polypeptide: UvrABC system protein C (616 aa).

Residues 21–99 (HQPGVYRMYD…IKLYLPKYNV (79 aa)) enclose the GIY-YIG domain. The 36-residue stretch at 209–244 (RQVIASLVEKMEQASQSLNFEQAATFRDQIQALRRV) folds into the UVR domain.

This sequence belongs to the UvrC family. As to quaternary structure, interacts with UvrB in an incision complex.

The protein resides in the cytoplasm. Its function is as follows. The UvrABC repair system catalyzes the recognition and processing of DNA lesions. UvrC both incises the 5' and 3' sides of the lesion. The N-terminal half is responsible for the 3' incision and the C-terminal half is responsible for the 5' incision. In Photobacterium profundum (strain SS9), this protein is UvrABC system protein C.